The primary structure comprises 1065 residues: Presequence protease, mitochondrial (1065 aa).

Residues 1–42 (MLRSFSGAGKCKCRIPVSRQPVCGRSLRISSTLTPWNQSRRA) constitute a mitochondrion transit peptide. A Zn(2+)-binding site is contributed by His-117. Glu-120 acts as the Proton acceptor in catalysis. Zn(2+) is bound at residue His-121. Glu-193 is an active-site residue. Residue Glu-230 participates in Zn(2+) binding.

This sequence belongs to the peptidase M16 family. PreP subfamily. Monomer and homodimer; homodimerization is induced by binding of the substrate. Zn(2+) serves as cofactor.

It localises to the mitochondrion intermembrane space. Its subcellular location is the mitochondrion matrix. In terms of biological role, degrades mitochondrial transit peptides after their cleavage in the intermembrane space or in the matrix, and presequence peptides; clearance of these peptides is required to keep the presequence processing machinery running. Preferentially cleaves the N-terminal side of paired basic amino acid residues. Also degrades other unstructured peptides. May function as an ATP-dependent peptidase as opposed to a metalloendopeptidase. In Aspergillus fumigatus (strain ATCC MYA-4609 / CBS 101355 / FGSC A1100 / Af293) (Neosartorya fumigata), this protein is Presequence protease, mitochondrial (cym1).